Consider the following 674-residue polypeptide: DNA ligase (674 aa).

NAD(+) is bound by residues D34–D38, S84–L85, and E116. Catalysis depends on K118, which acts as the N6-AMP-lysine intermediate. R139, E174, K291, and K315 together coordinate NAD(+). Residues C409, C412, C425, and C430 each coordinate Zn(2+). In terms of domain architecture, BRCT spans R586–S674.

This sequence belongs to the NAD-dependent DNA ligase family. LigA subfamily. It depends on Mg(2+) as a cofactor. Mn(2+) serves as cofactor.

It catalyses the reaction NAD(+) + (deoxyribonucleotide)n-3'-hydroxyl + 5'-phospho-(deoxyribonucleotide)m = (deoxyribonucleotide)n+m + AMP + beta-nicotinamide D-nucleotide.. DNA ligase that catalyzes the formation of phosphodiester linkages between 5'-phosphoryl and 3'-hydroxyl groups in double-stranded DNA using NAD as a coenzyme and as the energy source for the reaction. It is essential for DNA replication and repair of damaged DNA. The chain is DNA ligase from Thermus scotoductus.